Reading from the N-terminus, the 396-residue chain is Serine/threonine-protein kinase VRK1 (396 aa).

The region spanning 37–317 is the Protein kinase domain; it reads WKVGLPIGQG…LLDYTEKPLY (281 aa). ATP contacts are provided by residues 43–51 and Lys71; that span reads IGQGGFGCI. Lys71 participates in a covalent cross-link: Glycyl lysine isopeptide (Lys-Gly) (interchain with G-Cter in SUMO2). Asp177 functions as the Proton acceptor in the catalytic mechanism. Ser342 is subject to Phosphoserine; by PLK3. Positions 354 to 396 are disordered; that stretch reads ITKKRKKEIEESKEPGVEDTEWSNTQTEEAIQTRSRTRKRVQK. At Thr355 the chain carries Phosphothreonine; by autocatalysis. The span at 360–369 shows a compositional bias: basic and acidic residues; it reads KEIEESKEPG. Residues 375–387 are compositionally biased toward polar residues; it reads WSNTQTEEAIQTR. Ser376 is subject to Phosphoserine. A Phosphothreonine modification is found at Thr378. Residues 387–393 form a required for interaction with the nucleosome region; it reads RSRTRKR.

This sequence belongs to the protein kinase superfamily. CK1 Ser/Thr protein kinase family. VRK subfamily. As to quaternary structure, interacts with HDAC1, KAT2B, SETDB1, KDM3A and KDM4A. Associates with the nucleosome through interactions with nucleosome DNA, histone H2A and histone H2B; the interaction with H2A and H2B is mediated by the nucleosome acidic patch, a cluster of negatively charged residues of H2A and H2B forming a cleft within the nucleosome core. In terms of assembly, (Microbial infection) Interacts with vaccinia protein B12; this interaction inhibits the repressive activity of the vaccinia virus B12 pseudokinase on viral replication factory formation. Post-translationally, autophosphorylated at various serine and threonine residues. Autophosphorylation does not impair its ability to phosphorylate p53/TP53. Phosphorylation by PLK3 leads to induction of Golgi fragmentation during mitosis. As to expression, widely expressed. Highly expressed in fetal liver, testis and thymus.

It is found in the nucleus. Its subcellular location is the cytoplasm. The protein resides in the cajal body. It catalyses the reaction L-seryl-[protein] + ATP = O-phospho-L-seryl-[protein] + ADP + H(+). It carries out the reaction L-threonyl-[protein] + ATP = O-phospho-L-threonyl-[protein] + ADP + H(+). Its activity is regulated as follows. Active in presence of Mn(2+), Mg(2+) and Zn(2+), but is not functional with Ca(2+) or Cu(2+). Has a higher affinity for Mn(2+) than for Mg(2+). RAN inhibits its autophosphorylation and its ability to phosphorylate histone H3. Functionally, serine/threonine kinase involved in the regulation of key cellular processes including the cell cycle, nuclear condensation, transcription regulation, and DNA damage response. Controls chromatin organization and remodeling by mediating phosphorylation of histone H3 on 'Thr-4' and histone H2AX (H2aXT4ph). It also phosphorylates KAT5 in response to DNA damage, promoting KAT5 association with chromatin and histone acetyltransferase activity. Is involved in the regulation of cell cycle progression of neural progenitors, and is required for proper cortical neuronal migration. Is involved in neurite elongation and branching in motor neurons, and has an essential role in Cajal bodies assembly, acting through COIL phosphorylation and the control of coilin degradation. Involved in Golgi disassembly during the cell cycle: following phosphorylation by PLK3 during mitosis, it is required to induce Golgi fragmentation. Phosphorylates BANF1: disrupts its ability to bind DNA, reduces its binding to LEM domain-containing proteins and causes its relocalization from the nucleus to the cytoplasm. Phosphorylates TP53BP1 and p53/TP53 on 'Thr-18', preventing the interaction between p53/TP53 and MDM2. Phosphorylates ATF2 which activates its transcriptional activity. Phosphorylates JUN. The chain is Serine/threonine-protein kinase VRK1 from Homo sapiens (Human).